The following is a 296-amino-acid chain: MPKLSQIVADMKQAIDAKDEAQIAFIASEYSADARQRIAQGYRDQYGKELPDDIKKALKGGSEESLLMDLFSDRHEVRAQHIRDALSGKNDHMAFFDTVILCTPEDWHETVAAYTRMFKKPLVEDFMKDVGRKENWCLFMEKWMAHERTSREGSPDEEAEKLNKAFSESDHDYISSFMAGVPPEEYKSINTSFKSLTGKGIDQAFATIYTGTDYYSLYCAHFALLGMHKLAAYLVNCACNDKGDEKRMRRITGMMVDKCLAAKYAYKTYGSMKADVERCFDKRMAPILCTLWRLRE.

4 Annexin repeats span residues 2 to 71 (PKLS…MDLF), 73 to 143 (DRHE…MEKW), 153 to 223 (GSPD…AHFA), and 226 to 293 (GMHK…TLWR).

It belongs to the annexin family. Giardin subunit alpha subfamily.

Its subcellular location is the cytoplasm. It localises to the cytoskeleton. Functionally, giardins are involved in parasite attachment to the intestinal mucosa and in the cytoskeletal disassembly and reassembly that marks the transition from infectious trophozoite to transmissible cyst. They may interact with other cytoskeletal proteins such as microtubules in the microribbons or crossbridges, to maintain the integrity of the ventral disk. This is Giardin subunit alpha-2 from Giardia intestinalis (Giardia lamblia).